Reading from the N-terminus, the 96-residue chain is UPF0235 protein VC_0458 (96 aa).

This sequence belongs to the UPF0235 family.

The chain is UPF0235 protein VC_0458 from Vibrio cholerae serotype O1 (strain ATCC 39315 / El Tor Inaba N16961).